The primary structure comprises 294 residues: N-acetylmuramic acid 6-phosphate etherase (294 aa).

The region spanning 56–219 is the SIS domain; that stretch reads TSYSLRNGGR…STLSMVSVGK (164 aa). The active-site Proton donor is the Glu84. The active site involves Glu115.

Belongs to the GCKR-like family. MurNAc-6-P etherase subfamily. In terms of assembly, homodimer.

It carries out the reaction N-acetyl-D-muramate 6-phosphate + H2O = N-acetyl-D-glucosamine 6-phosphate + (R)-lactate. It functions in the pathway amino-sugar metabolism; 1,6-anhydro-N-acetylmuramate degradation. The protein operates within amino-sugar metabolism; N-acetylmuramate degradation. It participates in cell wall biogenesis; peptidoglycan recycling. Specifically catalyzes the cleavage of the D-lactyl ether substituent of MurNAc 6-phosphate, producing GlcNAc 6-phosphate and D-lactate. Together with AnmK, is also required for the utilization of anhydro-N-acetylmuramic acid (anhMurNAc) either imported from the medium or derived from its own cell wall murein, and thus plays a role in cell wall recycling. The chain is N-acetylmuramic acid 6-phosphate etherase from Francisella tularensis subsp. tularensis (strain SCHU S4 / Schu 4).